The primary structure comprises 283 residues: Cyclin-C (283 aa).

In terms of domain architecture, Cyclin N-terminal spans 20 to 151 (DLLKERQKDL…LLELMDCCLI (132 aa)). The tract at residues 252–283 (TILSKMPKPKPPPNSEGEQGPNGSQNSSYSQS) is disordered. Residues 272-283 (PNGSQNSSYSQS) are compositionally biased toward polar residues. S275 carries the post-translational modification Phosphoserine.

Belongs to the cyclin family. Cyclin C subfamily. As to quaternary structure, component of the Mediator complex, which is composed of MED1, MED4, MED6, MED7, MED8, MED9, MED10, MED11, MED12, MED13, MED13L, MED14, MED15, MED16, MED17, MED18, MED19, MED20, MED21, MED22, MED23, MED24, MED25, MED26, MED27, MED29, MED30, MED31, CCNC, CDK8 and CDC2L6/CDK11. The MED12, MED13, CCNC and CDK8 subunits form a distinct module termed the CDK8 module. Mediator containing the CDK8 module is less active than Mediator lacking this module in supporting transcriptional activation. Individual preparations of the Mediator complex lacking one or more distinct subunits have been variously termed ARC, CRSP, DRIP, PC2, SMCC and TRAP. The cylin/CDK pair formed by CCNC/CDK8 also associates with the large subunit of RNA polymerase II.

Its subcellular location is the nucleus. Functionally, component of the Mediator complex, a coactivator involved in regulated gene transcription of nearly all RNA polymerase II-dependent genes. Mediator functions as a bridge to convey information from gene-specific regulatory proteins to the basal RNA polymerase II transcription machinery. Mediator is recruited to promoters by direct interactions with regulatory proteins and serves as a scaffold for the assembly of a functional preinitiation complex with RNA polymerase II and the general transcription factors. Binds to and activates cyclin-dependent kinase CDK8 that phosphorylates the CTD (C-terminal domain) of the large subunit of RNA polymerase II (RNAp II), which may inhibit the formation of a transcription initiation complex. This chain is Cyclin-C (Ccnc), found in Mus musculus (Mouse).